A 333-amino-acid polypeptide reads, in one-letter code: MNDILNKEPMEEDYGIEKSLRPQFFNQYIGQDKVKEQLEIFIKAAKMREEVLDHVLLFGPPGLGKTTMAFVIANELGVNIKQTAGPAIEKPGDLVAILNELEPGDVLFIDEIHRMPMQVEEVLYSAMEDFYIDIMLGSGDGSRSVHLDLPPFTLVGATTRAGMLSNPLRARFGISSHMEYYQERDLEEIVKRTADIFEVEVIDNAALEIALRSRGTPRIANRLLKRVRDFAQIMGDGRVDKAITDKALSILDVDAAGLDYIDQKILRTMIEMYHGGPVGIGTLAVNIAEDRETVEDMYEPYLIQKGFLMRTKQGRKVTQRAYEHLGYVYNEED.

The segment at 1-181 is large ATPase domain (RuvB-L); the sequence is MNDILNKEPM…FGISSHMEYY (181 aa). Residues leucine 20, arginine 21, glycine 62, lysine 65, threonine 66, threonine 67, 128–130, arginine 171, tyrosine 181, and arginine 218 each bind ATP; that span reads EDF. Threonine 66 serves as a coordination point for Mg(2+). The tract at residues 182–252 is small ATPAse domain (RuvB-S); that stretch reads QERDLEEIVK…ITDKALSILD (71 aa). The segment at 255–333 is head domain (RuvB-H); the sequence is AAGLDYIDQK…HLGYVYNEED (79 aa). Positions 291, 310, and 315 each coordinate DNA.

The protein belongs to the RuvB family. As to quaternary structure, homohexamer. Forms an RuvA(8)-RuvB(12)-Holliday junction (HJ) complex. HJ DNA is sandwiched between 2 RuvA tetramers; dsDNA enters through RuvA and exits via RuvB. An RuvB hexamer assembles on each DNA strand where it exits the tetramer. Each RuvB hexamer is contacted by two RuvA subunits (via domain III) on 2 adjacent RuvB subunits; this complex drives branch migration. In the full resolvosome a probable DNA-RuvA(4)-RuvB(12)-RuvC(2) complex forms which resolves the HJ.

Its subcellular location is the cytoplasm. The enzyme catalyses ATP + H2O = ADP + phosphate + H(+). The RuvA-RuvB-RuvC complex processes Holliday junction (HJ) DNA during genetic recombination and DNA repair, while the RuvA-RuvB complex plays an important role in the rescue of blocked DNA replication forks via replication fork reversal (RFR). RuvA specifically binds to HJ cruciform DNA, conferring on it an open structure. The RuvB hexamer acts as an ATP-dependent pump, pulling dsDNA into and through the RuvAB complex. RuvB forms 2 homohexamers on either side of HJ DNA bound by 1 or 2 RuvA tetramers; 4 subunits per hexamer contact DNA at a time. Coordinated motions by a converter formed by DNA-disengaged RuvB subunits stimulates ATP hydrolysis and nucleotide exchange. Immobilization of the converter enables RuvB to convert the ATP-contained energy into a lever motion, pulling 2 nucleotides of DNA out of the RuvA tetramer per ATP hydrolyzed, thus driving DNA branch migration. The RuvB motors rotate together with the DNA substrate, which together with the progressing nucleotide cycle form the mechanistic basis for DNA recombination by continuous HJ branch migration. Branch migration allows RuvC to scan DNA until it finds its consensus sequence, where it cleaves and resolves cruciform DNA. The polypeptide is Holliday junction branch migration complex subunit RuvB (Lactococcus lactis subsp. lactis (strain IL1403) (Streptococcus lactis)).